Reading from the N-terminus, the 390-residue chain is MTVKLMKDQDLAGKRVLIREDLNVPLDGGRITSTVRIDAAIPTLKAALEAGAKVAVMSHLGRPDEGVYDAAASLAPVAKYLSEKLGREVPLVQDWIDGYSADADLVLLENVRFNKGEGKNDDALAQKMAALCDVFVMDAFGTAHRAQASTHGVAKFAPIACAGPLLAAELDALGKVLDKPARPLVAIVGGSKVSTKLSVLDAVSKIADVLVVGGGISNTFVASAGNEVGNSLYEKDLIPEAQRLRAQTEVVFATDVRVTKEGFKEWSHNSVAVAKKASEIQADEEIVDYGPETAARVAEIIKNAKTVLWNGPCGVFEFDAFAQGTEVVARAIAESEAFSIAGGGDTLAAIDKWNLADKISYVSTGGGAFLEFVEGKKLPAVAILEERAKA.

Substrate contacts are provided by residues 21-23 (DLN), arginine 36, 59-62 (HLGR), arginine 112, and arginine 145. Residues lysine 196, glutamate 317, and 343–346 (GGDT) contribute to the ATP site.

The protein belongs to the phosphoglycerate kinase family. As to quaternary structure, monomer.

It is found in the cytoplasm. The catalysed reaction is (2R)-3-phosphoglycerate + ATP = (2R)-3-phospho-glyceroyl phosphate + ADP. Its pathway is carbohydrate degradation; glycolysis; pyruvate from D-glyceraldehyde 3-phosphate: step 2/5. The sequence is that of Phosphoglycerate kinase from Cellvibrio japonicus (strain Ueda107) (Pseudomonas fluorescens subsp. cellulosa).